Consider the following 74-residue polypeptide: Putative sulfur carrier protein NMA0882 (74 aa).

Cysteine 13 serves as the catalytic Cysteine persulfide intermediate.

This sequence belongs to the sulfur carrier protein TusA family.

The polypeptide is Putative sulfur carrier protein NMA0882 (Neisseria meningitidis serogroup A / serotype 4A (strain DSM 15465 / Z2491)).